Here is a 432-residue protein sequence, read N- to C-terminus: Ectonucleoside triphosphate diphosphohydrolase 5 (432 aa).

Residues 1-24 (MALYQGAAFFMLVASCVCSTVFHR) form the signal peptide. E175 serves as the catalytic Proton acceptor. N235 carries an N-linked (GlcNAc...) asparagine glycan. 2 disulfide bridges follow: C275/C307 and C367/C381. An N-linked (GlcNAc...) asparagine glycan is attached at N372.

The protein belongs to the GDA1/CD39 NTPase family. As to quaternary structure, monomer; active form. Homodimer; disulfide-linked. Homodimers are enzymatically inactive. Requires Ca(2+) as cofactor. Mg(2+) serves as cofactor. Post-translationally, N-glycosylated; high-mannose type.

It localises to the endoplasmic reticulum. Its subcellular location is the secreted. It catalyses the reaction a ribonucleoside 5'-diphosphate + H2O = a ribonucleoside 5'-phosphate + phosphate + H(+). It carries out the reaction GDP + H2O = GMP + phosphate + H(+). The enzyme catalyses UDP + H2O = UMP + phosphate + H(+). The catalysed reaction is IDP + H2O = IMP + phosphate + H(+). It catalyses the reaction CDP + H2O = CMP + phosphate + H(+). It carries out the reaction ADP + H2O = AMP + phosphate + H(+). It functions in the pathway protein modification; protein glycosylation. Functionally, hydrolyzes nucleoside diphosphates with a preference for GDP, IDP and UDP compared to ADP and CDP. In the lumen of the endoplasmic reticulum, hydrolyzes UDP that acts as an end-product feedback inhibitor of the UDP-Glc:glycoprotein glucosyltransferases. UMP can be transported back by an UDP-sugar antiporter to the cytosol where it is consumed to regenerate UDP-glucose. Therefore, it positively regulates protein reglucosylation by clearing UDP from the ER lumen and by promoting the regeneration of UDP-glucose. Protein reglucosylation is essential to proper glycoprotein folding and quality control in the ER. The protein is Ectonucleoside triphosphate diphosphohydrolase 5 (ENTPD5) of Bos taurus (Bovine).